A 493-amino-acid polypeptide reads, in one-letter code: MKPTSLPKNFTNNPAPKAVTGFKLDNGRAYRKLNEAWPVYEPLDSTKDGKGKDKDGWTTSGASEPKGDAPLVSSTGSQMSAVTDSQQSGHNSGLVSLAQRSTTVAVQKSDSSGFQGQGTTDNKFQKYLNTAQALHQMGVIVPSLETWPGKPSTGIATRAGGGVSVQAATRQSSSTNEDLPNVITQLYHTSTSQLAYLNGQIVVMGSNAVPSLWYWVVDERTTSGSATWWAKTHLNFGTEVQKSFVENQLGFKDDSNSDSKNSNLKAQDLTQPAYLITGLDVVQDHLVFAAFKAGAVGYDMTTDSNASTKDQALAWSTTAGLDSAGGYNNLVENTAGLNGPINDLFTLLDTFAYVTPVSGMKGGSQNNEEVQTKYPVKDDSKASAKIASLINASPLNSYGDDGVTVFDALGLNFNFKLDEARLPSRTDQLLVYGIVNESELKSARENAQSTSDDNSNTKVKWTKPPRTTSPCRITTVPISPKRVTEEERSSGNH.

Polar residues predominate over residues 1–14 (MKPTSLPKNFTNNP). Disordered stretches follow at residues 1-92 (MKPT…GHNS) and 441-493 (KSAR…SGNH). 2 stretches are compositionally biased toward basic and acidic residues: residues 25–34 (DNGRAYRKLN) and 44–56 (DSTK…DKDG). Composition is skewed to polar residues over residues 72–92 (VSST…GHNS) and 445–472 (ENAQ…SPCR). Positions 482–493 (RVTEEERSSGNH) are enriched in basic and acidic residues.

This sequence belongs to the MgpC family.

This Mycoplasma pneumoniae (strain ATCC 29342 / M129 / Subtype 1) (Mycoplasmoides pneumoniae) protein is Putative MgpC-like protein MPN_414.